Consider the following 31-residue polypeptide: Cytochrome b6-f complex subunit 6 (31 aa).

The chain crosses the membrane as a helical span at residues 4–24 (ITSYFGFLLAALTITSVLFIG).

This sequence belongs to the PetL family. The 4 large subunits of the cytochrome b6-f complex are cytochrome b6, subunit IV (17 kDa polypeptide, PetD), cytochrome f and the Rieske protein, while the 4 small subunits are PetG, PetL, PetM and PetN. The complex functions as a dimer.

Its subcellular location is the plastid. It is found in the chloroplast thylakoid membrane. Component of the cytochrome b6-f complex, which mediates electron transfer between photosystem II (PSII) and photosystem I (PSI), cyclic electron flow around PSI, and state transitions. PetL is important for photoautotrophic growth as well as for electron transfer efficiency and stability of the cytochrome b6-f complex. The protein is Cytochrome b6-f complex subunit 6 of Arabidopsis thaliana (Mouse-ear cress).